A 557-amino-acid polypeptide reads, in one-letter code: Probable protein kinase UbiB (557 aa).

The region spanning 121-509 (SFDTVPLASA…RKLQTRVVTA (389 aa)) is the Protein kinase domain. Residues 127 to 135 (LASASIAQV) and lysine 154 each bind ATP. Catalysis depends on aspartate 289, which acts as the Proton acceptor. The next 2 membrane-spanning stretches (helical) occupy residues 506-526 (VVTA…YGLH) and 535-555 (VPVW…VAWL).

Belongs to the ABC1 family. UbiB subfamily.

The protein resides in the cell inner membrane. Its pathway is cofactor biosynthesis; ubiquinone biosynthesis [regulation]. Functionally, is probably a protein kinase regulator of UbiI activity which is involved in aerobic coenzyme Q (ubiquinone) biosynthesis. This chain is Probable protein kinase UbiB, found in Xanthomonas axonopodis pv. citri (strain 306).